The sequence spans 469 residues: Transcriptional coactivator YAP1 (469 aa).

A compositionally biased stretch (pro residues) spans 1-21; that stretch reads MEPAQQPPPQPAPQGPAPPSV. The disordered stretch occupies residues 1–47; sequence MEPAQQPPPQPAPQGPAPPSVSPAGTPAAPPAPPAGHQVVHVRGDSE. S46 is subject to Phosphoserine. T48 carries the phosphothreonine modification. The stretch at 71–85 forms a coiled coil; sequence MRLRKLPDSFFKPPE. N6-lactoyllysine is present on K75. The interval 76-99 is disordered; it reads LPDSFFKPPEPKSHSRQASTDAGT. 2 positions are modified to phosphoserine: S90 and S94. Phosphothreonine occurs at positions 95 and 104. A Phosphoserine; by LATS1 and LATS2 modification is found at S112. Residues S113 and S116 each carry the phosphoserine modification. Position 136 is a phosphothreonine; by MAPK8 and MAPK9 (T136). S146 is modified (phosphoserine; by LATS1 and LATS2). WW domains are found at residues 153–186 and 212–245; these read VPLPAGWEMAKTSSGQRYFLNHNDQTTTWQDPRK and GPLPDGWEQAMTQDGEVYYINHKNKTTSWLDPRL. The disordered stretch occupies residues 258–290; that stretch reads SAPVKQPPPLAPQSPQGGVLGGGSSNQQQQIQL. Residues S271 and S320 each carry the phosphoserine modification. The tract at residues 273–469 is transactivation domain; it reads QGGVLGGGSS…LDKESFLTWL (197 aa). Residues 280–325 adopt a coiled-coil conformation; that stretch reads GSSNQQQQIQLQQLQMEKERLRLKQQELFRQELALRSQLPSLEQDG. S333 carries the post-translational modification Phosphoserine; by MAPK8 and MAPK9. Polar residues predominate over residues 345 to 357; the sequence is TNSSDPFLNSGTY. Residues 345 to 405 form a disordered region; sequence TNSSDPFLNS…SQSTLPSQQS (61 aa). A phosphoserine mark is found at S347, S348, and S354. S363 is subject to Phosphoserine; by LATS1 and LATS2. Positions 365 to 375 are enriched in polar residues; sequence DSGLSMSSYSI. Residues S366 and S369 each carry the phosphoserine; by CK1 modification. At Y373 the chain carries Phosphotyrosine; by ABL1. T378 is subject to Phosphothreonine; by MAPK8 and MAPK9. A compositionally biased stretch (polar residues) spans 393 to 405; it reads DTISQSTLPSQQS.

Belongs to the YAP1 family. Part of a complex when phosphorylated that contains DSG3, PKP1, YAP1 and YWHAG; the complex is required for localization of DSG3 and YAP1 to the cell membrane in keratinocytes. Binds to the SH3 domain of the YES kinase. Binds to WBP1 and WBP2. Binds, in vitro, through the WW1 domain, to neural isoforms of ENAH that contain the PPSY motif. The phosphorylated form interacts with YWHAB. Interacts (via WW domains) with LATS1 (via PPxY motif 2). Interacts with LATS2. Interacts (via WW domain 1) with ERBB4 (via PPxY motif 2). Interacts with TEAD1, TEAD2, TEAD3 and TEAD4. Interacts with TP73. Interacts with RUNX1. Interacts with HCK. Interacts (via WW domains) with PTPN14 (via PPxY motif 2); this interaction leads to the cytoplasmic sequestration of YAP1 and inhibits its transcriptional coactivator activity. Interacts (when phosphorylated at Ser-112) with SMAD2, SMAD3 and WWTR1. Interacts with PRRG2 (via cytoplasmic domain). Interacts (via WW domains) with PRRG4 (via cytoplasmic domain). Interacts (phosphorylated) with CLDN18; the interaction sequesters YAP1 away from the nucleus and thereby restricts transcription of YAP1 target genes. Interacts with SMAD1. Interacts with AMOT; the interaction facilitates translocation of YAP1 to the cytoplasm and tight junctions. Interacts with AMOTL2, the interaction is required for ubiquitination of AMOTL2 and localization of YAP1 to tight junctions. Post-translationally, phosphorylated by LATS1 and LATS2; leading to cytoplasmic translocation and inactivation. Phosphorylated by ABL1; leading to YAP1 stabilization, enhanced interaction with TP73 and recruitment onto proapoptotic genes; in response to DNA damage. Phosphorylation at Ser-366 and Ser-369 by CK1 is triggered by previous phosphorylation at Ser-363 by LATS proteins and leads to YAP1 ubiquitination by SCF(beta-TRCP) E3 ubiquitin ligase and subsequent degradation. Phosphorylated at Thr-104, Thr-136, Ser-333 and Thr-378 by MAPK8/JNK1 and MAPK9/JNK2, which is required for the regulation of apoptosis by YAP1. Lactylation by AARS1 promotes nuclear localization and stabilization of YAP1, leading to increased Hippo signaling pathway. Delactylated by SIRT1. In terms of processing, ubiquitinated by SCF(beta-TRCP) E3 ubiquitin ligase. As to expression, highly specific to cortical neurons.

The protein localises to the cytoplasm. The protein resides in the nucleus. It localises to the cell junction. It is found in the tight junction. Its subcellular location is the cell membrane. Transcriptional regulator with dual roles as a coactivator and corepressor. Critical downstream regulatory target in the Hippo signaling pathway, crucial for organ size control and tumor suppression by restricting proliferation and promoting apoptosis. The Hippo signaling pathway core involves a kinase cascade featuring STK3/MST2 and STK4/MST1, along with its regulatory partner SAV1, which phosphorylates and activates LATS1/2 in complex with their regulatory protein, MOB1. This activation leads to the phosphorylation and inactivation of the YAP1 oncoprotein and WWTR1/TAZ. Phosphorylation of YAP1 by LATS1/2 prevents its nuclear translocation, thereby regulating the expression of its target genes. The transcriptional regulation of gene expression requires TEAD transcription factors and modulates cell growth, anchorage-independent growth, and induction of epithelial-mesenchymal transition (EMT). Plays a key role in tissue tension and 3D tissue shape by regulating the cortical actomyosin network, acting via ARHGAP18, a Rho GTPase activating protein that suppresses F-actin polymerization. It also suppresses ciliogenesis by acting as a transcriptional corepressor of TEAD4 target genes AURKA and PLK1. In conjunction with WWTR1, regulates TGFB1-dependent SMAD2 and SMAD3 nuclear accumulation. Synergizes with WBP2 to enhance PGR activity. In terms of biological role, attenuates p73-mediated cell death signaling in transcriptional repression-induced atypical death (TRIAD) of neurons. This is Transcriptional coactivator YAP1 (Yap1) from Rattus norvegicus (Rat).